The chain runs to 552 residues: Metal transporter Nramp6.1 (552 aa).

N-linked (GlcNAc...) asparagine glycosylation occurs at Asn-11. The next 7 membrane-spanning stretches (helical) occupy residues 55–75 (FLSYVGPGFLVSLAYLDPGNL), 88–108 (ELLWVVLVGLIFALTIQSLAA), 133–155 (CLWLLAEIAVMAADIPEVIGTAF), 159–181 (ILFNIPVWFGVLCTGCSTLLLLG), 189–209 (KLELLIAVLVFVMAACFFGEM), 238–258 (IALLGALVMPHNLFLHSALVL), and 275–295 (YFLIESGLALFVAFLINLAVI). Asn-306 is a glycosylation site (N-linked (GlcNAc...) asparagine). A run of 5 helical transmembrane segments spans residues 338–358 (IYAIAVLASGQSSTITGTYAG), 377–397 (LVTRCIAITPSLIVSIIGGSS), 402–422 (LIIIASMILSFELPFALIPLL), 438–458 (IYIIVLSWILGLGIIGINIYY), and 478–498 (VFIGIIVFPLMAIYILAVIYL). The tract at residues 511 to 552 (PNKNDPQQQTNMENGLAKSTEGPEMVDRAPYREDLADIPLPE) is disordered. Residues 514 to 523 (NDPQQQTNME) show a composition bias toward polar residues. Residues 535 to 545 (MVDRAPYREDL) are compositionally biased toward basic and acidic residues.

The protein belongs to the NRAMP (TC 2.A.55) family.

Its subcellular location is the membrane. Functionally, probable divalent metal transporter. In Populus trichocarpa (Western balsam poplar), this protein is Metal transporter Nramp6.1.